A 448-amino-acid polypeptide reads, in one-letter code: T-box transcription factor TBX19 (448 aa).

The segment at residues 45-218 is a DNA-binding region (T-box); that stretch reads LEDAPLWQRF…YNPFAKAFLD (174 aa).

Its subcellular location is the nucleus. Its function is as follows. Transcriptional regulator involved in developmental processes. Can activate POMC gene expression and repress the alpha glycoprotein subunit and thyroid-stimulating hormone beta promoters. The chain is T-box transcription factor TBX19 from Homo sapiens (Human).